A 413-amino-acid polypeptide reads, in one-letter code: Multifunctional CCA protein (413 aa).

ATP contacts are provided by Gly-8 and Arg-11. Positions 8 and 11 each coordinate CTP. Asp-21 and Asp-23 together coordinate Mg(2+). Arg-91, Arg-143, and Arg-146 together coordinate ATP. CTP-binding residues include Arg-91, Arg-143, and Arg-146. The HD domain maps to 232–333 (TGVHVMMVVD…VRLFERSDAL (102 aa)).

Belongs to the tRNA nucleotidyltransferase/poly(A) polymerase family. Bacterial CCA-adding enzyme type 1 subfamily. In terms of assembly, monomer. Can also form homodimers and oligomers. Mg(2+) is required as a cofactor. It depends on Ni(2+) as a cofactor.

It catalyses the reaction a tRNA precursor + 2 CTP + ATP = a tRNA with a 3' CCA end + 3 diphosphate. The enzyme catalyses a tRNA with a 3' CCA end + 2 CTP + ATP = a tRNA with a 3' CCACCA end + 3 diphosphate. Its function is as follows. Catalyzes the addition and repair of the essential 3'-terminal CCA sequence in tRNAs without using a nucleic acid template. Adds these three nucleotides in the order of C, C, and A to the tRNA nucleotide-73, using CTP and ATP as substrates and producing inorganic pyrophosphate. tRNA 3'-terminal CCA addition is required both for tRNA processing and repair. Also involved in tRNA surveillance by mediating tandem CCA addition to generate a CCACCA at the 3' terminus of unstable tRNAs. While stable tRNAs receive only 3'-terminal CCA, unstable tRNAs are marked with CCACCA and rapidly degraded. The polypeptide is Multifunctional CCA protein (Burkholderia lata (strain ATCC 17760 / DSM 23089 / LMG 22485 / NCIMB 9086 / R18194 / 383)).